A 32-amino-acid chain; its full sequence is ilv operon leader peptide (32 aa).

In Escherichia coli O157:H7, this protein is ilv operon leader peptide (ilvL).